A 604-amino-acid polypeptide reads, in one-letter code: Aspartate--tRNA(Asp/Asn) ligase (604 aa).

Glutamate 169 contributes to the L-aspartate binding site. Residues 193 to 196 are aspartate; it reads QLFK. Arginine 215 lines the L-aspartate pocket. Residues 215 to 217 and glutamine 224 each bind ATP; that span reads RDE. Residue histidine 456 participates in L-aspartate binding. Residue glutamate 490 coordinates ATP. Arginine 497 is a binding site for L-aspartate. An ATP-binding site is contributed by 542–545; that stretch reads GWDR. The segment at 571-604 is disordered; that stretch reads PLTGAPAPITAQQRKEAGVDAQPEPKQAEAEPEA.

It belongs to the class-II aminoacyl-tRNA synthetase family. Type 1 subfamily. Homodimer.

The protein resides in the cytoplasm. It carries out the reaction tRNA(Asx) + L-aspartate + ATP = L-aspartyl-tRNA(Asx) + AMP + diphosphate. In terms of biological role, aspartyl-tRNA synthetase with relaxed tRNA specificity since it is able to aspartylate not only its cognate tRNA(Asp) but also tRNA(Asn). Reaction proceeds in two steps: L-aspartate is first activated by ATP to form Asp-AMP and then transferred to the acceptor end of tRNA(Asp/Asn). The sequence is that of Aspartate--tRNA(Asp/Asn) ligase from Micrococcus luteus (strain ATCC 4698 / DSM 20030 / JCM 1464 / CCM 169 / CCUG 5858 / IAM 1056 / NBRC 3333 / NCIMB 9278 / NCTC 2665 / VKM Ac-2230) (Micrococcus lysodeikticus).